We begin with the raw amino-acid sequence, 1470 residues long: Collagen alpha-1(XVII) chain (1470 aa).

3 disordered regions span residues 1–155 (MDVT…PSTR), 167–193 (KGSRSASASPTRNTSNTLPIPKKGTVE), and 422–452 (SAENHGYDRGGGGGRGKGGGAGGGGGGGGAS). The Cytoplasmic portion of the chain corresponds to 1–476 (MDVTKKSKRD…CGSCCSWWKW (476 aa)). The segment at 1-573 (MDVTKKSKRD…MTEQENGNLR (573 aa)) is nonhelical region (NC16). A compositionally biased stretch (basic and acidic residues) spans 9-19 (RDGTEVTERIV). Residues 60–74 (GSSGYINSSGSIRGN) show a composition bias toward low complexity. Composition is skewed to polar residues over residues 75–96 (ASTSSYRRTHSPASTLPNSPGS), 111–120 (EGSSSGNSSP), and 170–184 (RSASASPTRNTSNTL). Positions 146 to 231 (RLQSASPSTR…WSSTLPAGSS (86 aa)) are necessary for interaction with DST and for the recruitment of DST to hemidesmosome. Over residues 430-452 (RGGGGGRGKGGGAGGGGGGGGAS) the composition is skewed to gly residues. The chain crosses the membrane as a helical; Signal-anchor for type II membrane protein span at residues 477–497 (LLGLLLTWLLLLGLLFGLIAL). The Extracellular segment spans residues 498–1470 (AEEVRKLKAR…RRKRSIAIKP (973 aa)). Phosphoserine; by CK2 is present on Ser-551. 5 disordered regions span residues 568–873 (ENGN…FLSS), 885–999 (GVDL…SSSG), 1159–1181 (DYRNIIGPPGPPGPPGMPGNAWS), 1194–1220 (TAGLSSIPGPPGPPGPPGPRGPPGVSA), and 1249–1298 (FIVG…TNGG). The tract at residues 574–1456 (GSPGPKGDMG…KGEKGDKGDQ (883 aa)) is triple-helical region. Positions 597-609 (PGIPGPLGHPGPE) are enriched in pro residues. 2 stretches are compositionally biased toward low complexity: residues 742 to 755 (EPGAKGAMGPAGAD) and 781 to 803 (DPGKPGLTGPQGPQGLPGSPGRP). Residues 827–848 (PGPPGPPGAMGPPGPPGTPGPA) are compositionally biased toward pro residues. Residues 850 to 873 (PAGLPGQQGPRGEPGLAGDSFLSS) show a composition bias toward low complexity. Pro residues-rich tracts occupy residues 891 to 914 (PPGPPGPRGPPGPSIPGPPGPRGP), 940 to 949 (PPGPPGPPGP), 982 to 992 (PPGPPGPPGPP), 1166 to 1175 (PPGPPGPPGM), 1201 to 1215 (PGPPGPPGPPGPRGP), and 1253 to 1262 (PPGPPGPQGP). N-linked (GlcNAc...) asparagine glycosylation occurs at Asn-1273. A compositionally biased stretch (low complexity) spans 1275–1290 (SSNSSARRGTSYSSST). Residue Asn-1395 is glycosylated (N-linked (GlcNAc...) asparagine). Positions 1406 to 1470 (TYGTIPGPPG…RRKRSIAIKP (65 aa)) are disordered. Over residues 1434 to 1443 (PRGPPGPPGP) the composition is skewed to pro residues. Positions 1446-1455 (NKGEKGDKGD) are enriched in basic and acidic residues. Positions 1457–1470 (VYTGRRKRSIAIKP) are nonhelical region (NC1). Basic residues predominate over residues 1460 to 1470 (GRRKRSIAIKP).

Homotrimers of alpha 1(XVII)chains. Interacts (via cytoplasmic region) with ITGB4 (via cytoplasmic region). Interacts (via cytoplasmic region) with DST (via N-terminus). Interacts (via N-terminus) with PLEC. Interacts (via cytoplasmic region) with DSP. In terms of processing, the intracellular/endo domain is disulfide-linked. Prolines at the third position of the tripeptide repeating unit (G-X-Y) are hydroxylated in some or all of the chains. Post-translationally, the ectodomain is shedded from the surface of keratinocytes resulting in a 120-kDa soluble form, also named as 120 kDa linear IgA disease antigen homolog. The shedding is mediated by membrane-bound metalloproteases. This cleavage is inhibited by phosphorylation at Ser-551.

The protein localises to the cell junction. It is found in the hemidesmosome. It localises to the membrane. Its subcellular location is the secreted. The protein resides in the extracellular space. The protein localises to the extracellular matrix. It is found in the basement membrane. Its function is as follows. May play a role in the integrity of hemidesmosome and the attachment of basal keratinocytes to the underlying basement membrane. Functionally, the 120 kDa linear IgA disease antigen homolog is an anchoring filament component involved in dermal-epidermal cohesion. The polypeptide is Collagen alpha-1(XVII) chain (Col17a1) (Mus musculus (Mouse)).